Here is a 515-residue protein sequence, read N- to C-terminus: ATP synthase subunit alpha (515 aa).

171–178 (GDRQTGKT) lines the ATP pocket.

Belongs to the ATPase alpha/beta chains family. In terms of assembly, F-type ATPases have 2 components, CF(1) - the catalytic core - and CF(0) - the membrane proton channel. CF(1) has five subunits: alpha(3), beta(3), gamma(1), delta(1), epsilon(1). CF(0) has three main subunits: a(1), b(2) and c(9-12). The alpha and beta chains form an alternating ring which encloses part of the gamma chain. CF(1) is attached to CF(0) by a central stalk formed by the gamma and epsilon chains, while a peripheral stalk is formed by the delta and b chains.

It localises to the cell inner membrane. The enzyme catalyses ATP + H2O + 4 H(+)(in) = ADP + phosphate + 5 H(+)(out). In terms of biological role, produces ATP from ADP in the presence of a proton gradient across the membrane. The alpha chain is a regulatory subunit. This chain is ATP synthase subunit alpha, found in Xylella fastidiosa (strain Temecula1 / ATCC 700964).